Reading from the N-terminus, the 1004-residue chain is MGLFGKDRGERIAEFPCYLLETGTHLVPLPGILYNLVIERTYGERILGQFRGIGEAVDGALTGAGEAAEVPGRVAEVMKAFQERYDSGDKTQAVYICLVTEAAAGRHIGCIARLTGARAEGGELSVLLRGLVRAVVGQPVPSRRNEMWNGSVTVLDDAQRVATWGARQLDFARQGVFGAFEELDAGIGTFTARFKSSQKRGADGAAHLLTLSPLANTLFFHFSRSSFERSWKILRTMMHGFRDAKKDIRTAMDMLSVADLTVGLLPTTTAQRLEFLQAEDPAARIKTFVRHMQQLLEVFGSLYRATEYVHDRFETHGPIAKSQLIANQLRSLRFYIDDIKRNKPESGPGGRSRRLLPRPASGNSAAAGEEDDSEDSELVAIKRYVDEIEVKGVHADGVKMLKKDYRSLSKMHVQSTEYQMLRNYFDFIMGIPFGIYVSTPEIDLVASSRKLDNDHYGLVQVKKRLLEYLCVLKLSANSPGVTADAGAIEDGSATKRAVVYENKAQEQRKTKVPFLLLVGPPGVGKTSVAKSVADVLGRRFQRISLGGIHNEAEIRGHRRTYVGAMAGMIVNALCKAGCMNPLILLDEIDKVLSVPAGAGASRLNGDPGAALLEVLDPEQNHTFTDHYVGFPVDLSQVLFFCTANDLSGMSEPLVDRMEVIHIEGYTYEEKIAIGRHFLLPKQIRLNSFDMTGINLSLTDDAWRTVVVDYTREAGVRNLDRQLGAIVRGKIVEYVENNMSGSGDDVVTQKNLPKFLGLPPHSLREEVTQTTSFAEKYGVVHGLSYNSDGTGGVLVFEVIRSGDSRDKRLTVQTTGNLGTVLSESVSIATSLVKSLLARHVVHSSADDTSVAEFFRSECHLHVPFGAVPKDGPSAGAAISLALLSLALKRPVDPALCVTGEITLRGKILPVGGVKEKLLAAQLQGMGLALVPRGNRNDLVELAEDNAETQQRLLADPALPELATLQHKLGMAVHYCSDFRDLVLHAWPTADNLWHACEDSSVRPQL.

In terms of domain architecture, Lon N-terminal spans 15–296; that stretch reads FPCYLLETGT…TFVRHMQQLL (282 aa). The interval 340–374 is disordered; that stretch reads KRNKPESGPGGRSRRLLPRPASGNSAAAGEEDDSE. A compositionally biased stretch (low complexity) spans 357–367; sequence PRPASGNSAAA. 519-526 is an ATP binding site; it reads GPPGVGKT. In terms of domain architecture, Lon proteolytic spans 773-987; that stretch reads AEKYGVVHGL…RDLVLHAWPT (215 aa). Active-site residues include S872 and K915. Positions 1002-1004 match the Microbody targeting signal motif; sequence PQL.

Belongs to the peptidase S16 family.

It is found in the peroxisome matrix. It catalyses the reaction Hydrolysis of proteins in presence of ATP.. ATP-dependent serine protease that mediates the selective degradation of misfolded and unassembled polypeptides in the peroxisomal matrix. Necessary for type 2 peroxisome targeting signal (PTS2)-containing protein processing and facilitates peroxisome matrix protein import. In Eremothecium gossypii (strain ATCC 10895 / CBS 109.51 / FGSC 9923 / NRRL Y-1056) (Yeast), this protein is Lon protease homolog 2, peroxisomal.